The following is a 101-amino-acid chain: Gibberellin-regulated protein 6 (101 aa).

A signal peptide spans 1–23 (MAKLITSFLLLTILFTFVCLTMS).

Belongs to the GASA family. Post-translationally, six disulfide bonds may be present.

It localises to the secreted. Functionally, gibberellin-regulated protein that may function in hormonal controlled steps of development such as seed germination, flowering and seed maturation. The chain is Gibberellin-regulated protein 6 (GASA6) from Arabidopsis thaliana (Mouse-ear cress).